Consider the following 251-residue polypeptide: MPNQGPVSDWTECSSSAEPPAVARAEGGGGGSAGHSYYQNSKDRIKDGHKVNSPRAKLQELWKMPQTVHTPKSMTEPSFLKHPDLTLVEKHYLCSVAKIYNANYLRTLMKRHYMHVIQRSSQKPGVLTHHRGHLSSRYSQKQHYPCTTWRHQLEREDLGPPNTAAASAPEMIQHSLWRPVRNKEGLKTGYASKTRCKSLKIFRKPGRPFMQSVSANDSESYMNEEKKEEDLLNKCMQSMSIEEQGEHLMLT.

Residues 1–16 (MPNQGPVSDWTECSSS) are compositionally biased toward polar residues. Residues 1–49 (MPNQGPVSDWTECSSSAEPPAVARAEGGGGGSAGHSYYQNSKDRIKDGH) form a disordered region.

Belongs to the FAM216 family.

The chain is Protein FAM216A (FAM216A) from Bos taurus (Bovine).